A 440-amino-acid chain; its full sequence is Chromosome partition protein MukF (440 aa).

The segment at Leu208–Ile236 is leucine-zipper.

This sequence belongs to the MukF family. In terms of assembly, interacts, and probably forms a ternary complex, with MukE and MukB via its C-terminal region. The complex formation is stimulated by calcium or magnesium. It is required for an interaction between MukE and MukB.

It is found in the cytoplasm. The protein localises to the nucleoid. Involved in chromosome condensation, segregation and cell cycle progression. May participate in facilitating chromosome segregation by condensation DNA from both sides of a centrally located replisome during cell division. Not required for mini-F plasmid partitioning. Probably acts via its interaction with MukB and MukE. Overexpression results in anucleate cells. It has a calcium binding activity. This Klebsiella pneumoniae subsp. pneumoniae (strain ATCC 700721 / MGH 78578) protein is Chromosome partition protein MukF.